The sequence spans 675 residues: DNA ligase (675 aa).

NAD(+) contacts are provided by residues 33 to 37, 82 to 83, and Glu114; these read DAEYD and SL. Catalysis depends on Lys116, which acts as the N6-AMP-lysine intermediate. The NAD(+) site is built by Arg137, Glu174, Lys291, and Lys315. The Zn(2+) site is built by Cys409, Cys412, Cys427, and Cys433. In terms of domain architecture, BRCT spans 595-675; sequence AGDNPFAGKT…EMIRLLDQSK (81 aa).

It belongs to the NAD-dependent DNA ligase family. LigA subfamily. The cofactor is Mg(2+). It depends on Mn(2+) as a cofactor.

It catalyses the reaction NAD(+) + (deoxyribonucleotide)n-3'-hydroxyl + 5'-phospho-(deoxyribonucleotide)m = (deoxyribonucleotide)n+m + AMP + beta-nicotinamide D-nucleotide.. DNA ligase that catalyzes the formation of phosphodiester linkages between 5'-phosphoryl and 3'-hydroxyl groups in double-stranded DNA using NAD as a coenzyme and as the energy source for the reaction. It is essential for DNA replication and repair of damaged DNA. The protein is DNA ligase of Proteus mirabilis (strain HI4320).